The following is a 348-amino-acid chain: Rhodopsin (348 aa).

Met-1 is modified (N-acetylmethionine). Residues 1–36 (MNGTEGLNFYVPFSNKTGVVRSPFEYPQYYLAEPWQ) are Extracellular-facing. N-linked (GlcNAc...) asparagine glycans are attached at residues Asn-2 and Asn-15. The chain crosses the membrane as a helical span at residues 37–61 (FSVLAAYMFLLIVLGFPINFLTLYV). The Cytoplasmic portion of the chain corresponds to 62 to 73 (TVQHKKLRTPLN). A helical transmembrane segment spans residues 74 to 99 (YILLNLAVANLFMVFGGFTTTLYTSL). Topologically, residues 100–111 (HAYFVFGPTGCN) are extracellular. A disulfide bond links Cys-110 and Cys-187. The helical transmembrane segment at 112–133 (LEGFFATLGGEIALWSLVVLAI) threads the bilayer. Positions 134 to 136 (ERY) match the 'Ionic lock' involved in activated form stabilization motif. The Cytoplasmic segment spans residues 134–152 (ERYVVVCKPMSNFRFGENH). The chain crosses the membrane as a helical span at residues 153–173 (AIMGLALTWIMAMACAAAPLV). Over 174 to 202 (GWSRYIPEGMQCSCGIDYYTSRQEVNNES) the chain is Extracellular. Glu-201 contacts Zn(2+). A helical membrane pass occupies residues 203–227 (FVIYMFVVHFTIPLVIIFFCYGQLV). At 228–252 (FTVKEAAAQQQESATTQKAEKEVTR) the chain is on the cytoplasmic side. The chain crosses the membrane as a helical span at residues 253–274 (MVIIMVVAFLICWVPYASVAFY). Over 275–286 (IFTHQGSDFGPI) the chain is Extracellular. Zn(2+) is bound at residue Gln-279. Residues 287 to 306 (FMTIPSFFAKSSSIYNPVIY) traverse the membrane as a helical segment. The residue at position 296 (Lys-296) is an N6-(retinylidene)lysine. Residues 307–348 (IMMNKQFRNCMLTTLCCGRNPLGDDEASTTASKTETSQVAPA) lie on the Cytoplasmic side of the membrane. 2 S-palmitoyl cysteine lipidation sites follow: Cys-322 and Cys-323. A Phosphoserine modification is found at Ser-334. Phosphothreonine is present on residues Thr-335 and Thr-336. Ser-338 carries the post-translational modification Phosphoserine. Phosphothreonine is present on residues Thr-340 and Thr-342. The residue at position 343 (Ser-343) is a Phosphoserine.

The protein belongs to the G-protein coupled receptor 1 family. Opsin subfamily. In terms of assembly, homodimer. May form a complex composed of RHO, GRK1 and RCVRN in a Ca(2+)-dependent manner; RCVRN prevents the interaction between GRK1 and RHO. Interacts with GRK1. Interacts (phosphorylated form) with SAG. Interacts with GNAT1. Interacts with GNAT3. SAG and G-proteins compete for a common binding site. Interacts with PRCD; the interaction promotes PRCD stability. Forms a complex with ASAP1 and ARF4. Forms a complex with ASAP1, RAB11A, Rabin8/RAB3IP, ARF4 and RAB11FIP3; the complex regulates Golgi-to-cilia rhodopsin/RHO transport in photoreceptors. In terms of processing, contains one covalently linked retinal chromophore. Upon light absorption, the covalently bound 11-cis-retinal is converted to all-trans-retinal. After hydrolysis of the Schiff base and release of the covalently bound all-trans-retinal, active rhodopsin is regenerated by binding of a fresh molecule of 11-cis-retinal.

The protein localises to the membrane. It localises to the cell projection. The protein resides in the cilium. It is found in the photoreceptor outer segment. Functionally, photoreceptor required for image-forming vision at low light intensity. Light-induced isomerization of 11-cis to all-trans retinal triggers a conformational change that activates signaling via G-proteins. Signaling mediates the activation of phospholipase C. Subsequent receptor phosphorylation mediates displacement of the bound G-protein alpha subunit by arrestin and terminates signaling. This is Rhodopsin (RHO) from Tursiops truncatus (Atlantic bottle-nosed dolphin).